We begin with the raw amino-acid sequence, 417 residues long: NADH-quinone oxidoreductase subunit D (417 aa).

It belongs to the complex I 49 kDa subunit family. NDH-1 is composed of 14 different subunits. Subunits NuoB, C, D, E, F, and G constitute the peripheral sector of the complex.

It is found in the cell inner membrane. The enzyme catalyses a quinone + NADH + 5 H(+)(in) = a quinol + NAD(+) + 4 H(+)(out). In terms of biological role, NDH-1 shuttles electrons from NADH, via FMN and iron-sulfur (Fe-S) centers, to quinones in the respiratory chain. The immediate electron acceptor for the enzyme in this species is believed to be ubiquinone. Couples the redox reaction to proton translocation (for every two electrons transferred, four hydrogen ions are translocated across the cytoplasmic membrane), and thus conserves the redox energy in a proton gradient. The chain is NADH-quinone oxidoreductase subunit D from Nitrosomonas eutropha (strain DSM 101675 / C91 / Nm57).